Reading from the N-terminus, the 116-residue chain is Tachykinin-3 (116 aa).

A signal peptide spans 1–20 (MRSAMLFAAVLALSLAWTFG). A propeptide spanning residues 21–79 (AVCEEPQGQGGRLSKDSDLYQLPPSLLRRLYDSRPVSLEGLLKVLSKASVGPKETSLPQ) is cleaved from the precursor. M91 carries the post-translational modification Methionine amide. A disordered region spans residues 93–116 (KRNSQPDTPTDVVEENTPSFGILK). The propeptide occupies 95–116 (NSQPDTPTDVVEENTPSFGILK).

Belongs to the tachykinin family.

The protein localises to the secreted. Its function is as follows. Tachykinins are active peptides which excite neurons, evoke behavioral responses, are potent vasodilators and secretagogues, and contract (directly or indirectly) many smooth muscles. Is a critical central regulator of gonadal function. This Mus musculus (Mouse) protein is Tachykinin-3 (Tac3).